Here is a 929-residue protein sequence, read N- to C-terminus: Type I restriction enzyme SauCOLORF180P endonuclease subunit (929 aa).

Residues 254 to 418 (QQATETGNNG…DGRTTADIFG (165 aa)) form the Helicase ATP-binding domain. An ATP-binding site is contributed by 268–274 (TTGSGKT).

Belongs to the HsdR family. The type I restriction/modification system is composed of three polypeptides R, M and S.

The enzyme catalyses Endonucleolytic cleavage of DNA to give random double-stranded fragments with terminal 5'-phosphates, ATP is simultaneously hydrolyzed.. Its function is as follows. The restriction (R) subunit of a type I restriction enzyme that recognizes an undetermined sequence and cleaves a random distance away. Subunit R is required for both nuclease and ATPase activities, but not for modification. After locating a non-methylated recognition site, the enzyme complex serves as a molecular motor that translocates DNA in an ATP-dependent manner until a collision occurs that triggers cleavage. The chain is Type I restriction enzyme SauCOLORF180P endonuclease subunit from Staphylococcus aureus (strain COL).